The primary structure comprises 151 residues: Nucleoside diphosphate kinase (151 aa).

Positions 11, 59, 87, 93, 104, and 114 each coordinate ATP. His117 acts as the Pros-phosphohistidine intermediate in catalysis.

It belongs to the NDK family. Homotetramer. Requires Mg(2+) as cofactor.

It localises to the cytoplasm. It catalyses the reaction a 2'-deoxyribonucleoside 5'-diphosphate + ATP = a 2'-deoxyribonucleoside 5'-triphosphate + ADP. The catalysed reaction is a ribonucleoside 5'-diphosphate + ATP = a ribonucleoside 5'-triphosphate + ADP. Functionally, major role in the synthesis of nucleoside triphosphates other than ATP. The ATP gamma phosphate is transferred to the NDP beta phosphate via a ping-pong mechanism, using a phosphorylated active-site intermediate. The sequence is that of Nucleoside diphosphate kinase from Prochlorococcus marinus (strain MIT 9211).